The chain runs to 301 residues: uncharacterized protein (301 aa).

Positions 1 to 28 (MFFREDKSVAFRLRSAALSGCATGQSDA) are cleaved as a signal peptide.

This is an uncharacterized protein from Treponema pallidum (strain Nichols).